A 214-amino-acid polypeptide reads, in one-letter code: Cytochrome c biogenesis ATP-binding export protein CcmA (214 aa).

Residues 12–214 (LAARALAFSR…TRMLTLEAAA (203 aa)) enclose the ABC transporter domain. 44-51 (GDNGAGKT) contacts ATP.

This sequence belongs to the ABC transporter superfamily. CcmA exporter (TC 3.A.1.107) family. The complex is composed of two ATP-binding proteins (CcmA) and two transmembrane proteins (CcmB).

It localises to the cell inner membrane. It carries out the reaction heme b(in) + ATP + H2O = heme b(out) + ADP + phosphate + H(+). Its function is as follows. Part of the ABC transporter complex CcmAB involved in the biogenesis of c-type cytochromes; once thought to export heme, this seems not to be the case, but its exact role is uncertain. Responsible for energy coupling to the transport system. The chain is Cytochrome c biogenesis ATP-binding export protein CcmA from Xanthomonas campestris pv. campestris (strain 8004).